We begin with the raw amino-acid sequence, 134 residues long: Probable histone H2A.3 (134 aa).

The protein belongs to the histone H2A family. The nucleosome is a histone octamer containing two molecules each of H2A, H2B, H3 and H4 assembled in one H3-H4 heterotetramer and two H2A-H2B heterodimers. The octamer wraps approximately 147 bp of DNA.

The protein resides in the nucleus. Its subcellular location is the chromosome. Core component of nucleosome. Nucleosomes wrap and compact DNA into chromatin, limiting DNA accessibility to the cellular machineries which require DNA as a template. Histones thereby play a central role in transcription regulation, DNA repair, DNA replication and chromosomal stability. DNA accessibility is regulated via a complex set of post-translational modifications of histones, also called histone code, and nucleosome remodeling. This is Probable histone H2A.3 from Oryza sativa subsp. indica (Rice).